The following is a 268-amino-acid chain: Inositol monophosphatase 3 (268 aa).

Residues glutamate 71, aspartate 91, leucine 93, and aspartate 94 each contribute to the Mg(2+) site. Glutamate 71 serves as a coordination point for substrate. Substrate contacts are provided by residues 93 to 96, 194 to 196, glutamate 213, and aspartate 221; these read LDGT and GSC. Position 221 (aspartate 221) interacts with Mg(2+).

It belongs to the inositol monophosphatase superfamily. Mg(2+) serves as cofactor. Expressed in the shoot apex, roots, stems, leaves, flowers and young and mature green fruits.

It carries out the reaction a myo-inositol phosphate + H2O = myo-inositol + phosphate. The protein operates within polyol metabolism; myo-inositol biosynthesis; myo-inositol from D-glucose 6-phosphate: step 2/2. Responsible for the provision of inositol required for synthesis of phosphatidylinositol and polyphosphoinositides. In Solanum lycopersicum (Tomato), this protein is Inositol monophosphatase 3 (IMP3).